The sequence spans 561 residues: Long-chain-fatty-acid--CoA ligase (561 aa).

213 to 224 (YTGGTTGVAKGA) is a binding site for ATP.

The protein belongs to the ATP-dependent AMP-binding enzyme family. Requires Mg(2+) as cofactor.

Its subcellular location is the membrane. The catalysed reaction is a long-chain fatty acid + ATP + CoA = a long-chain fatty acyl-CoA + AMP + diphosphate. It functions in the pathway lipid metabolism; fatty acid beta-oxidation. Functionally, catalyzes the esterification, concomitant with transport, of exogenous long-chain fatty acids into metabolically active CoA thioesters for subsequent degradation or incorporation into phospholipids. The sequence is that of Long-chain-fatty-acid--CoA ligase (fadD) from Escherichia coli O157:H7.